The chain runs to 240 residues: Methylthioribulose-1-phosphate dehydratase (240 aa).

Cysteine 99 is a substrate binding site. Histidine 116 and histidine 118 together coordinate Zn(2+). Glutamate 145 acts as the Proton donor/acceptor in catalysis. Residue histidine 201 coordinates Zn(2+).

The protein belongs to the aldolase class II family. MtnB subfamily. Zn(2+) is required as a cofactor.

The protein resides in the cytoplasm. It catalyses the reaction 5-(methylsulfanyl)-D-ribulose 1-phosphate = 5-methylsulfanyl-2,3-dioxopentyl phosphate + H2O. The protein operates within amino-acid biosynthesis; L-methionine biosynthesis via salvage pathway; L-methionine from S-methyl-5-thio-alpha-D-ribose 1-phosphate: step 2/6. In terms of biological role, catalyzes the dehydration of methylthioribulose-1-phosphate (MTRu-1-P) into 2,3-diketo-5-methylthiopentyl-1-phosphate (DK-MTP-1-P). The chain is Methylthioribulose-1-phosphate dehydratase from Ajellomyces capsulatus (strain H143) (Darling's disease fungus).